The following is a 102-amino-acid chain: Large ribosomal subunit protein bL21 (102 aa).

The protein belongs to the bacterial ribosomal protein bL21 family. In terms of assembly, part of the 50S ribosomal subunit. Contacts protein L20.

Its function is as follows. This protein binds to 23S rRNA in the presence of protein L20. This is Large ribosomal subunit protein bL21 from Enterococcus faecalis (strain ATCC 700802 / V583).